A 37-amino-acid chain; its full sequence is Calcitonin gene-related peptide 1 (37 aa).

Cys-2 and Cys-7 are joined by a disulfide. Phenylalanine amide is present on Phe-37.

The protein belongs to the calcitonin family.

It localises to the secreted. CGRP1/CALCA is a peptide hormone that induces vasodilation mediated by the CALCRL-RAMP1 receptor complex. Dilates a variety of vessels including the coronary, cerebral and systemic vasculature. Its abundance in the CNS also points toward a neurotransmitter or neuromodulator role. It also elevates platelet cAMP. CGRP1 can also bind and activate CALCR-RAMP1 (AMYR1) receptor complex. This Ovis aries (Sheep) protein is Calcitonin gene-related peptide 1 (CALCA).